Reading from the N-terminus, the 121-residue chain is Large ribosomal subunit protein uL18 (121 aa).

The protein belongs to the universal ribosomal protein uL18 family. In terms of assembly, part of the 50S ribosomal subunit; part of the 5S rRNA/L5/L18/L25 subcomplex. Contacts the 5S and 23S rRNAs.

In terms of biological role, this is one of the proteins that bind and probably mediate the attachment of the 5S RNA into the large ribosomal subunit, where it forms part of the central protuberance. The chain is Large ribosomal subunit protein uL18 from Bdellovibrio bacteriovorus (strain ATCC 15356 / DSM 50701 / NCIMB 9529 / HD100).